The primary structure comprises 497 residues: Putative diacyglycerol O-acyltransferase Rv3480c (497 aa).

The active-site Proton acceptor is the His143.

This sequence belongs to the long-chain O-acyltransferase family.

It carries out the reaction an acyl-CoA + a 1,2-diacyl-sn-glycerol = a triacyl-sn-glycerol + CoA. It catalyses the reaction di-(9Z)-octadecenoylglycerol + (9Z)-octadecenoyl-CoA = 1,2,3-tri-(9Z-octadecenoyl)-glycerol + CoA. The enzyme catalyses hexadecan-1-ol + hexadecanoyl-CoA = hexadecanyl hexadecanoate + CoA. Its pathway is glycerolipid metabolism; triacylglycerol biosynthesis. Upon expression in E.coli has a weak triacylglycerol synthase function, making triacylglycerol (TG) from diolein and long-chain fatty acyl-CoA. Also functions weakly as a wax synthase, as it incorporates palmityl alcohol into wax esters in the presence of palmitoyl-CoA. The protein is Putative diacyglycerol O-acyltransferase Rv3480c of Mycobacterium tuberculosis (strain ATCC 25618 / H37Rv).